Reading from the N-terminus, the 412-residue chain is Cinnamoyl-CoA:phenyllactate CoA-transferase (412 aa).

Asn-102 contacts CoA. The Nucleophile role is filled by Asp-176.

In terms of assembly, homodimer. Part of the heterotrimeric phenyllactate dehydratase complex FldABC, composed of (R)-phenyllactate CoA-transferase (FldA) and a heterodimeric (R)-phenyllactyl-CoA dehydratase (FldB and FldC).

It carries out the reaction (E)-cinnamoyl-CoA + (R)-3-phenyllactate = (R)-3-phenyllactoyl-CoA + (E)-cinnamate. It participates in amino-acid degradation; L-phenylalanine degradation. In terms of biological role, component of the phenyllactate dehydratase complex FldABC that is involved in the fermentation of L-phenylalanine via a Stickland reaction. This complex catalyzes the reversible syn-dehydration of (R)-phenyllactate to (E)-cinnamate in two steps, a CoA-transfer from cinnamoyl-CoA to phenyllactate, catalyzed by FldA, followed by the dehydration of phenyllactyl-CoA to cinnamoyl-CoA, catalyzed by FldB and FldC. In vitro, FldA can use 3-phenylpropanoate as a better CoA-acceptor than phenyllactate. The sequence is that of Cinnamoyl-CoA:phenyllactate CoA-transferase from Clostridium sporogenes.